A 420-amino-acid chain; its full sequence is Gamma-glutamyl phosphate reductase (420 aa).

The protein belongs to the gamma-glutamyl phosphate reductase family.

It localises to the cytoplasm. It catalyses the reaction L-glutamate 5-semialdehyde + phosphate + NADP(+) = L-glutamyl 5-phosphate + NADPH + H(+). Its pathway is amino-acid biosynthesis; L-proline biosynthesis; L-glutamate 5-semialdehyde from L-glutamate: step 2/2. In terms of biological role, catalyzes the NADPH-dependent reduction of L-glutamate 5-phosphate into L-glutamate 5-semialdehyde and phosphate. The product spontaneously undergoes cyclization to form 1-pyrroline-5-carboxylate. This chain is Gamma-glutamyl phosphate reductase, found in Alkalilimnicola ehrlichii (strain ATCC BAA-1101 / DSM 17681 / MLHE-1).